A 37-amino-acid polypeptide reads, in one-letter code: Large ribosomal subunit protein bL36 (37 aa).

Belongs to the bacterial ribosomal protein bL36 family.

This Histophilus somni (strain 129Pt) (Haemophilus somnus) protein is Large ribosomal subunit protein bL36.